The following is a 471-amino-acid chain: E3 ubiquitin-protein ligase TRIM38 (471 aa).

Residues 16–62 (CSICKAMMSHPVSINCGHSYCKSCIQSYYCNVSPKTGWKMLGCPLCS) form an RING-type zinc finger. The B box-type zinc-finger motif lies at 90-131 (DQDMVCEEHEEKFNRFCEDDGQLLCWRCYWEDRHKGHTLAHV). Zn(2+) contacts are provided by cysteine 95, histidine 98, cysteine 117, and histidine 123. A B30.2/SPRY domain is found at 276–471 (CNVSELYFDV…PLFLPAINNQ (196 aa)).

In terms of assembly, interacts (via B30.2/SPRY domain) with TAB2 and TAB3.

The protein localises to the cytoplasm. It carries out the reaction S-ubiquitinyl-[E2 ubiquitin-conjugating enzyme]-L-cysteine + [acceptor protein]-L-lysine = [E2 ubiquitin-conjugating enzyme]-L-cysteine + N(6)-ubiquitinyl-[acceptor protein]-L-lysine.. It functions in the pathway protein modification; protein ubiquitination. The protein operates within protein modification; protein sumoylation. Functionally, E3 ubiquitin-protein and E3 SUMO-protein ligase that acts as a regulator of innate immunity. Acts as a negative regulator of type I interferon IFN-beta production by catalyzing 'Lys-48'-linked polyubiquitination of AZI2/NAP1, leading to its degradation. Mediates 'Lys-48'-linked polyubiquitination and proteasomal degradation of the critical TLR adapter TICAM1, inhibiting TLR3-mediated type I interferon signaling. Acts as a positive regulator of the cGAS-STING pathway by acting as a E3 SUMO-protein ligase: mediates sumoylation of CGAS and STING, preventing their degradation and thereby activating the innate immune response to DNA virus. Also acts as a negative regulator of NF-kappa-B signaling independently of its E3 protein ligase activity by promoting lysosome-dependent degradation of TAB2 and TAB3 adapters. The chain is E3 ubiquitin-protein ligase TRIM38 from Mus musculus (Mouse).